The chain runs to 205 residues: S-crystallin SL11 (205 aa).

The GST N-terminal domain maps to 2 to 80 (PSYTLYYFNG…YLAREFGFYG (79 aa)). Residues 82 to 205 (NNMDMFKVDC…YIKKRNNTAF (124 aa)) enclose the GST C-terminal domain.

This sequence belongs to the GST superfamily. As to expression, lens.

S-crystallins are structural components of squids and octopi eye lens. Contains relatively little if any GST activity. The protein is S-crystallin SL11 of Nototodarus sloanii (Wellington flying squid).